A 199-amino-acid polypeptide reads, in one-letter code: Probable NADH dehydrogenase [ubiquinone] iron-sulfur protein 7, mitochondrial (199 aa).

[4Fe-4S] cluster contacts are provided by cysteine 74, cysteine 75, cysteine 139, and cysteine 169.

This sequence belongs to the complex I 20 kDa subunit family. Complex I is composed of 45 different subunits This is a component of the iron-sulfur (IP) fragment of the enzyme. It depends on [4Fe-4S] cluster as a cofactor.

The protein localises to the mitochondrion. The enzyme catalyses a ubiquinone + NADH + 5 H(+)(in) = a ubiquinol + NAD(+) + 4 H(+)(out). In terms of biological role, core subunit of the mitochondrial membrane respiratory chain NADH dehydrogenase (Complex I) that is believed to belong to the minimal assembly required for catalysis. Complex I functions in the transfer of electrons from NADH to the respiratory chain. The immediate electron acceptor for the enzyme is believed to be ubiquinone. This Caenorhabditis elegans protein is Probable NADH dehydrogenase [ubiquinone] iron-sulfur protein 7, mitochondrial (nduf-7).